A 405-amino-acid chain; its full sequence is Cytoplasmic tRNA 2-thiolation protein 2 (405 aa).

It belongs to the CTU2/NCS2 family.

It localises to the cytoplasm. Its pathway is tRNA modification; 5-methoxycarbonylmethyl-2-thiouridine-tRNA biosynthesis. Functionally, plays a central role in 2-thiolation of mcm(5)S(2)U at tRNA wobble positions of tRNA(Lys), tRNA(Glu) and tRNA(Gln). May act by forming a heterodimer with NCS6/CTU1 that ligates sulfur from thiocarboxylated URM1 onto the uridine of tRNAs at wobble position. The polypeptide is Cytoplasmic tRNA 2-thiolation protein 2 (Drosophila melanogaster (Fruit fly)).